We begin with the raw amino-acid sequence, 433 residues long: F-box only protein 15 (433 aa).

Positions 1 to 41 constitute an F-box domain; sequence MPSEILVKILSYLDAVTLVCIGCVSRRFYHLADDNLIWVRK.

Directly interacts with SKP1 and CUL1. As to expression, expressed in testis.

Substrate-recognition component of the SCF (SKP1-CUL1-F-box protein)-type E3 ubiquitin ligase complex. The sequence is that of F-box only protein 15 (Fbxo15) from Mus musculus (Mouse).